Consider the following 177-residue polypeptide: Adenine phosphoribosyltransferase (177 aa).

The protein belongs to the purine/pyrimidine phosphoribosyltransferase family. Homodimer.

It localises to the cytoplasm. The catalysed reaction is AMP + diphosphate = 5-phospho-alpha-D-ribose 1-diphosphate + adenine. The protein operates within purine metabolism; AMP biosynthesis via salvage pathway; AMP from adenine: step 1/1. In terms of biological role, catalyzes a salvage reaction resulting in the formation of AMP, that is energically less costly than de novo synthesis. This chain is Adenine phosphoribosyltransferase, found in Chlorobium phaeobacteroides (strain DSM 266 / SMG 266 / 2430).